Consider the following 227-residue polypeptide: 6,7-dimethyl-8-ribityllumazine synthase, chloroplastic (227 aa).

The N-terminal 71 residues, 1–71 (MKSLASPPCL…LRSSFVQTAA (71 aa)), are a transit peptide targeting the chloroplast. Residues Phe94, 128–130 (SFE), and 152–154 (AVI) each bind 5-amino-6-(D-ribitylamino)uracil. Position 157-158 (157-158 (DT)) interacts with (2S)-2-hydroxy-3-oxobutyl phosphate. The Proton donor role is filled by His160. Phe185 lines the 5-amino-6-(D-ribitylamino)uracil pocket. Residue Arg199 coordinates (2S)-2-hydroxy-3-oxobutyl phosphate.

Belongs to the DMRL synthase family. Oligomer forming an icosahedral capsid.

It is found in the plastid. The protein localises to the chloroplast. The catalysed reaction is (2S)-2-hydroxy-3-oxobutyl phosphate + 5-amino-6-(D-ribitylamino)uracil = 6,7-dimethyl-8-(1-D-ribityl)lumazine + phosphate + 2 H2O + H(+). Its pathway is cofactor biosynthesis; riboflavin biosynthesis; riboflavin from 2-hydroxy-3-oxobutyl phosphate and 5-amino-6-(D-ribitylamino)uracil: step 1/2. Catalyzes the formation of 6,7-dimethyl-8-ribityllumazine by condensation of 5-amino-6-(D-ribitylamino)uracil with 3,4-dihydroxy-2-butanone 4-phosphate. This is the penultimate step in the biosynthesis of riboflavin. The polypeptide is 6,7-dimethyl-8-ribityllumazine synthase, chloroplastic (Arabidopsis thaliana (Mouse-ear cress)).